The chain runs to 124 residues: UPF0102 protein MSMEG_2508/MSMEI_2448 (124 aa).

It belongs to the UPF0102 family.

In Mycolicibacterium smegmatis (strain ATCC 700084 / mc(2)155) (Mycobacterium smegmatis), this protein is UPF0102 protein MSMEG_2508/MSMEI_2448.